The primary structure comprises 159 residues: Ribosomal RNA large subunit methyltransferase H (159 aa).

Residues Leu-76, Gly-108, and 127–132 (FSPMTF) contribute to the S-adenosyl-L-methionine site.

The protein belongs to the RNA methyltransferase RlmH family. As to quaternary structure, homodimer.

The protein resides in the cytoplasm. It catalyses the reaction pseudouridine(1915) in 23S rRNA + S-adenosyl-L-methionine = N(3)-methylpseudouridine(1915) in 23S rRNA + S-adenosyl-L-homocysteine + H(+). Specifically methylates the pseudouridine at position 1915 (m3Psi1915) in 23S rRNA. This chain is Ribosomal RNA large subunit methyltransferase H, found in Alkaliphilus oremlandii (strain OhILAs) (Clostridium oremlandii (strain OhILAs)).